We begin with the raw amino-acid sequence, 444 residues long: Jacalin-related lectin 11 (444 aa).

Ala2 is modified (N-acetylalanine). Jacalin-type lectin domains follow at residues 2–143 (ALKV…YFIK), 146–290 (SIQS…YYAP), and 298–442 (PEKL…HVTA).

This sequence belongs to the jacalin lectin family.

The sequence is that of Jacalin-related lectin 11 (JAL11) from Arabidopsis thaliana (Mouse-ear cress).